The chain runs to 307 residues: Small ribosomal subunit biogenesis GTPase RsgA (307 aa).

One can recognise a CP-type G domain in the interval 64–229; that stretch reads KNSLIRPSIA…IADTPGFSSL (166 aa). GTP is bound by residues 113–116 and 172–180; these read SKLD and GQTGAGKTT. Positions 253, 258, 260, and 266 each coordinate Zn(2+).

This sequence belongs to the TRAFAC class YlqF/YawG GTPase family. RsgA subfamily. Monomer. Associates with 30S ribosomal subunit, binds 16S rRNA. It depends on Zn(2+) as a cofactor.

It is found in the cytoplasm. Its function is as follows. One of several proteins that assist in the late maturation steps of the functional core of the 30S ribosomal subunit. Helps release RbfA from mature subunits. May play a role in the assembly of ribosomal proteins into the subunit. Circularly permuted GTPase that catalyzes slow GTP hydrolysis, GTPase activity is stimulated by the 30S ribosomal subunit. The protein is Small ribosomal subunit biogenesis GTPase RsgA of Lactococcus lactis subsp. lactis (strain IL1403) (Streptococcus lactis).